Consider the following 252-residue polypeptide: Large ribosomal subunit protein uL3 (252 aa).

Glutamine 169 bears the N5-methylglutamine mark.

Belongs to the universal ribosomal protein uL3 family. In terms of assembly, part of the 50S ribosomal subunit. Forms a cluster with proteins L14 and L19. Post-translationally, methylated by PrmB.

Its function is as follows. One of the primary rRNA binding proteins, it binds directly near the 3'-end of the 23S rRNA, where it nucleates assembly of the 50S subunit. The chain is Large ribosomal subunit protein uL3 from Hyphomonas neptunium (strain ATCC 15444).